A 266-amino-acid polypeptide reads, in one-letter code: Indole-3-glycerol phosphate synthase (266 aa).

The protein belongs to the TrpC family.

It carries out the reaction 1-(2-carboxyphenylamino)-1-deoxy-D-ribulose 5-phosphate + H(+) = (1S,2R)-1-C-(indol-3-yl)glycerol 3-phosphate + CO2 + H2O. Its pathway is amino-acid biosynthesis; L-tryptophan biosynthesis; L-tryptophan from chorismate: step 4/5. The protein is Indole-3-glycerol phosphate synthase of Variovorax paradoxus (strain S110).